A 633-amino-acid chain; its full sequence is Chaperone protein HtpG (633 aa).

The segment at 1-344 (MSLQPQAETL…SNDLPLNISR (344 aa)) is a; substrate-binding. Residues 345–560 (ELLQSNEVIN…ENEMSGHLQR (216 aa)) form a b region. A c region spans residues 561–633 (LLIQTGQDFM…KGLNELLLDS (73 aa)).

Belongs to the heat shock protein 90 family. Homodimer.

The protein resides in the cytoplasm. Functionally, molecular chaperone. Has ATPase activity. This Coxiella burnetii (strain RSA 331 / Henzerling II) protein is Chaperone protein HtpG.